Consider the following 199-residue polypeptide: Recombination protein RecR (199 aa).

The C4-type zinc-finger motif lies at 57 to 72 (CSICGNITEGDPCSIC). Residues 80–176 (THVLVVEQPK…KVTRLAHGLS (97 aa)) enclose the Toprim domain.

The protein belongs to the RecR family.

Its function is as follows. May play a role in DNA repair. It seems to be involved in an RecBC-independent recombinational process of DNA repair. It may act with RecF and RecO. This chain is Recombination protein RecR, found in Levilactobacillus brevis (strain ATCC 367 / BCRC 12310 / CIP 105137 / JCM 1170 / LMG 11437 / NCIMB 947 / NCTC 947) (Lactobacillus brevis).